The following is a 292-amino-acid chain: Probable E3 ubiquitin-protein ligase RNF144A (292 aa).

A TRIAD supradomain region spans residues 16 to 236 (PLVSCKLCLG…YDKGPCRNKL (221 aa)). Zn(2+) is bound by residues cysteine 20, cysteine 23, cysteine 43, cysteine 46, cysteine 111, cysteine 116, cysteine 135, cysteine 138, cysteine 143, cysteine 146, histidine 151, cysteine 156, cysteine 185, and cysteine 188. The RING-type 1 zinc finger occupies 20 to 70 (CKLCLGEYTVEQMTTIAQCQCIFCTLCLKQYVELLIKEGLETAISCPDASC). Residues 91–156 (QKYKKLQFEK…KANWHPGQGC (66 aa)) form an IBR-type zinc finger. The segment at 185–214 (CPKCKVYIERDEGCAQMMCKNCKHAFCWYC) adopts an RING-type 2; atypical zinc-finger fold. Cysteine 198 is a catalytic residue. Residues cysteine 203, cysteine 206, cysteine 211, cysteine 214, histidine 226, and cysteine 232 each contribute to the Zn(2+) site. Residues 250-270 (VVGIFAGFGLLLLVASPFLLL) traverse the membrane as a helical segment.

The protein belongs to the RBR family. RNF144 subfamily.

Its subcellular location is the membrane. The catalysed reaction is [E2 ubiquitin-conjugating enzyme]-S-ubiquitinyl-L-cysteine + [acceptor protein]-L-lysine = [E2 ubiquitin-conjugating enzyme]-L-cysteine + [acceptor protein]-N(6)-ubiquitinyl-L-lysine.. It functions in the pathway protein modification; protein ubiquitination. Functionally, E3 ubiquitin-protein ligase which accepts ubiquitin from E2 ubiquitin-conjugating enzymes ube2l3 and ube2l6 in the form of a thioester and then directly transfers the ubiquitin to targeted substrates. The protein is Probable E3 ubiquitin-protein ligase RNF144A (rnf144a) of Xenopus tropicalis (Western clawed frog).